The primary structure comprises 475 residues: Ribulose bisphosphate carboxylase large chain (475 aa).

Residues 1 to 2 (MS) constitute a propeptide that is removed on maturation. An N-acetylproline modification is found at P3. Position 14 is an N6,N6,N6-trimethyllysine (K14). Substrate-binding residues include N123 and T173. Catalysis depends on K175, which acts as the Proton acceptor. K177 contributes to the substrate binding site. 3 residues coordinate Mg(2+): K201, D203, and E204. Residue K201 is modified to N6-carboxylysine. H294 (proton acceptor) is an active-site residue. Residues R295, H327, and S379 each contribute to the substrate site.

This sequence belongs to the RuBisCO large chain family. Type I subfamily. Heterohexadecamer of 8 large chains and 8 small chains; disulfide-linked. The disulfide link is formed within the large subunit homodimers. Mg(2+) is required as a cofactor. In terms of processing, the disulfide bond which can form in the large chain dimeric partners within the hexadecamer appears to be associated with oxidative stress and protein turnover.

The protein resides in the plastid. Its subcellular location is the chloroplast. It catalyses the reaction 2 (2R)-3-phosphoglycerate + 2 H(+) = D-ribulose 1,5-bisphosphate + CO2 + H2O. It carries out the reaction D-ribulose 1,5-bisphosphate + O2 = 2-phosphoglycolate + (2R)-3-phosphoglycerate + 2 H(+). Its function is as follows. RuBisCO catalyzes two reactions: the carboxylation of D-ribulose 1,5-bisphosphate, the primary event in carbon dioxide fixation, as well as the oxidative fragmentation of the pentose substrate in the photorespiration process. Both reactions occur simultaneously and in competition at the same active site. The polypeptide is Ribulose bisphosphate carboxylase large chain (Lotus japonicus (Lotus corniculatus var. japonicus)).